Reading from the N-terminus, the 73-residue chain is Kappa-scoloptoxin(03)-Ssm1b (73 aa).

An N-terminal signal peptide occupies residues 1–23 (MKPSMAILLVIALIIFSLDKSYS). Intrachain disulfides connect C32/C58, C41/C57, and C44/C67.

In terms of processing, contains 3 disulfide bonds. In terms of tissue distribution, expressed by the venom gland.

It is found in the secreted. Functionally, inhibits voltage-gated potassium channels. This is Kappa-scoloptoxin(03)-Ssm1b from Scolopendra mutilans (Chinese red-headed centipede).